A 540-amino-acid chain; its full sequence is Protein dml-1 (540 aa).

Residues 517 to 540 are disordered; that stretch reads NELAEMADEYHEGWSSGSDDGDDD.

The protein belongs to the misato family.

Its subcellular location is the mitochondrion. Its function is as follows. Involved in the partitioning of the mitochondrial organelle and mitochondrial DNA (mtDNA) inheritance. The polypeptide is Protein dml-1 (dml-1) (Neurospora crassa (strain ATCC 24698 / 74-OR23-1A / CBS 708.71 / DSM 1257 / FGSC 987)).